We begin with the raw amino-acid sequence, 179 residues long: Ubiquitin-conjugating enzyme E2 C (179 aa).

Residues M1 to T14 show a composition bias toward polar residues. The tract at residues M1–V31 is disordered. N-acetylalanine is present on A2. Residue S3 is modified to Phosphoserine. Residues P30–T175 form the UBC core domain. C114 (glycyl thioester intermediate) is an active-site residue.

It belongs to the ubiquitin-conjugating enzyme family. Component of the APC/C complex, composed of at least 14 distinct subunits that assemble into a complex of at least 19 chains with a combined molecular mass of around 1.2 MDa. Within this complex, directly interacts with ANAPC2. Post-translationally, autoubiquitinated by the APC/C complex, leading to its degradation by the proteasome. Its degradation plays a central role in APC/C regulation, allowing cyclin-A accumulation before S phase entry. APC/C substrates inhibit the autoubiquitination of UBE2C/UBCH10 but not its E2 function, hence APC/C remaining active until its substrates have been destroyed.

The enzyme catalyses S-ubiquitinyl-[E1 ubiquitin-activating enzyme]-L-cysteine + [E2 ubiquitin-conjugating enzyme]-L-cysteine = [E1 ubiquitin-activating enzyme]-L-cysteine + S-ubiquitinyl-[E2 ubiquitin-conjugating enzyme]-L-cysteine.. The catalysed reaction is S-ubiquitinyl-[E1 ubiquitin-activating enzyme]-L-cysteine + [acceptor protein]-L-lysine = [E1 ubiquitin-activating enzyme]-L-cysteine + N(6)-monoubiquitinyl-[acceptor protein]-L-lysine.. It participates in protein modification; protein ubiquitination. In terms of biological role, accepts ubiquitin from the E1 complex and catalyzes its covalent attachment to other proteins. In vitro catalyzes 'Lys-11'- and 'Lys-48'-linked polyubiquitination. Acts as an essential factor of the anaphase promoting complex/cyclosome (APC/C), a cell cycle-regulated ubiquitin ligase that controls progression through mitosis. Acts by initiating 'Lys-11'-linked polyubiquitin chains on APC/C substrates, leading to the degradation of APC/C substrates by the proteasome and promoting mitotic exit. The polypeptide is Ubiquitin-conjugating enzyme E2 C (UBE2C) (Macaca fascicularis (Crab-eating macaque)).